The chain runs to 385 residues: Acetate kinase (385 aa).

Mg(2+) is bound at residue asparagine 9. Lysine 16 serves as a coordination point for ATP. Arginine 87 contributes to the substrate binding site. Aspartate 144 serves as the catalytic Proton donor/acceptor. ATP contacts are provided by residues 202-206 and 277-279; these read HLGSG and DMR. Glutamate 373 is a binding site for Mg(2+).

Belongs to the acetokinase family. Homodimer. Mg(2+) is required as a cofactor. Requires Mn(2+) as cofactor.

The protein resides in the cytoplasm. The enzyme catalyses acetate + ATP = acetyl phosphate + ADP. It participates in metabolic intermediate biosynthesis; acetyl-CoA biosynthesis; acetyl-CoA from acetate: step 1/2. Catalyzes the formation of acetyl phosphate from acetate and ATP. Can also catalyze the reverse reaction. The protein is Acetate kinase of Rickettsia felis (strain ATCC VR-1525 / URRWXCal2) (Rickettsia azadi).